A 142-amino-acid chain; its full sequence is Thioredoxin-like protein 4A (142 aa).

Cysteines 38 and 79 form a disulfide. Ser132 carries the post-translational modification Phosphoserine.

This sequence belongs to the DIM1 family. As to quaternary structure, component of the precatalytic spliceosome (spliceosome B complex). Component of the U5 snRNP complex. Component of the U4/U6-U5 tri-snRNP complex. The U4/U6-U5 tri-snRNP complex is a building block of the precatalytic spliceosome (spliceosome B complex). The U4/U6-U5 tri-snRNP complex is composed of the U4, U6 and U5 snRNAs and at least PRPF3, PRPF4, PRPF6, PRPF8, PRPF31, SNRNP200, TXNL4A, SNRNP40, SNRPB, SNRPD1, SNRPD2, SNRPD3, SNRPE, SNRPF, SNRPG, DDX23, CD2BP2, PPIH, SNU13, EFTUD2, SART1 and USP39, plus LSM2, LSM3, LSM4, LSM5, LSM6, LSM7 and LSM8. Directly interacts with CD2BP2. Interacts with HNRPF, HNRPH2, NEDD9 and PQBP1. Interacts with ERBB4. The disulfide bond seen in structures determined by X-ray crystallography and NMR is not essential for protein folding and function.

It is found in the nucleus. Plays a role in pre-mRNA splicing as component of the U5 snRNP and U4/U6-U5 tri-snRNP complexes that are involved in spliceosome assembly, and as component of the precatalytic spliceosome (spliceosome B complex). The protein is Thioredoxin-like protein 4A (TXNL4A) of Homo sapiens (Human).